Here is a 1084-residue protein sequence, read N- to C-terminus: Putative tRNA-specific 2-thiouridylase (1084 aa).

A run of 3 helical transmembrane segments spans residues 1–21 (MLIF…FILT), 32–52 (FIIS…FYVI), and 309–329 (IITI…YLIL). C538 serves as the catalytic Nucleophile. C538 and C715 form a disulfide bridge. The active-site Cysteine persulfide intermediate is the C715.

It belongs to the MnmA/TRMU family.

It localises to the plastid. The protein localises to the apicoplast. The protein resides in the membrane. It carries out the reaction S-sulfanyl-L-cysteinyl-[protein] + uridine(34) in tRNA + AH2 + ATP = 2-thiouridine(34) in tRNA + L-cysteinyl-[protein] + A + AMP + diphosphate + H(+). Functionally, catalyzes the 2-thiolation of uridine at the wobble position (U34) of tRNA, leading to the formation of s(2)U34. Required for apicoplast maintenance. The sequence is that of Putative tRNA-specific 2-thiouridylase from Plasmodium falciparum (isolate 3D7).